Here is a 305-residue protein sequence, read N- to C-terminus: Sulfate adenylyltransferase subunit 2 (305 aa).

It belongs to the PAPS reductase family. CysD subfamily. Heterodimer composed of CysD, the smaller subunit, and CysN.

It carries out the reaction sulfate + ATP + H(+) = adenosine 5'-phosphosulfate + diphosphate. The protein operates within sulfur metabolism; hydrogen sulfide biosynthesis; sulfite from sulfate: step 1/3. Functionally, with CysN forms the ATP sulfurylase (ATPS) that catalyzes the adenylation of sulfate producing adenosine 5'-phosphosulfate (APS) and diphosphate, the first enzymatic step in sulfur assimilation pathway. APS synthesis involves the formation of a high-energy phosphoric-sulfuric acid anhydride bond driven by GTP hydrolysis by CysN coupled to ATP hydrolysis by CysD. The sequence is that of Sulfate adenylyltransferase subunit 2 from Pseudomonas entomophila (strain L48).